Consider the following 93-residue polypeptide: Small ribosomal subunit protein uS19 (93 aa).

Positions E73–K93 are disordered. Residues Y80–K93 show a composition bias toward basic residues.

Belongs to the universal ribosomal protein uS19 family.

Functionally, protein S19 forms a complex with S13 that binds strongly to the 16S ribosomal RNA. The sequence is that of Small ribosomal subunit protein uS19 (rpsS) from Aster yellows phytoplasma.